The following is a 185-amino-acid chain: Elongation factor P (185 aa).

The protein belongs to the elongation factor P family.

The protein localises to the cytoplasm. The protein operates within protein biosynthesis; polypeptide chain elongation. Its function is as follows. Involved in peptide bond synthesis. Stimulates efficient translation and peptide-bond synthesis on native or reconstituted 70S ribosomes in vitro. Probably functions indirectly by altering the affinity of the ribosome for aminoacyl-tRNA, thus increasing their reactivity as acceptors for peptidyl transferase. The protein is Elongation factor P of Rippkaea orientalis (strain PCC 8801 / RF-1) (Cyanothece sp. (strain PCC 8801)).